An 81-amino-acid chain; its full sequence is Albumin-1 (81 aa).

Positions 27-34 (LSSVAKMI) are excised as a propeptide.

In terms of processing, three disulfide bonds are probably present. Post-translationally, the C-terminal glycine may be removed from A1b.

A1b binds to basic 7S globulin (BG) and stimulates its phosphorylation activity. The protein is Albumin-1 (LEG1) of Lupinus angustifolius (Narrow-leaved blue lupine).